The following is a 252-amino-acid chain: Ribosomal RNA small subunit methyltransferase J (252 aa).

Residues Arg101–Asp102, Glu117–Arg118, Ser153–Ser154, and Asp171 contribute to the S-adenosyl-L-methionine site.

Belongs to the methyltransferase superfamily. RsmJ family.

It localises to the cytoplasm. The catalysed reaction is guanosine(1516) in 16S rRNA + S-adenosyl-L-methionine = N(2)-methylguanosine(1516) in 16S rRNA + S-adenosyl-L-homocysteine + H(+). Specifically methylates the guanosine in position 1516 of 16S rRNA. The chain is Ribosomal RNA small subunit methyltransferase J from Salmonella typhi.